Reading from the N-terminus, the 367-residue chain is Probable butyrate kinase (367 aa).

It belongs to the acetokinase family.

The protein localises to the cytoplasm. It carries out the reaction butanoate + ATP = butanoyl phosphate + ADP. This is Probable butyrate kinase from Bacillus cereus (strain ZK / E33L).